The following is a 64-amino-acid chain: Copper-specific metallothionein-2 (64 aa).

16 residues coordinate Cu(+): C3, C5, C9, C11, C16, C18, C22, C24, C27, C33, C40, C44, C50, C52, C56, and C58.

It belongs to the metallothionein superfamily. Type 2 family.

The metallothioneins are involved in the cellular sequestration of toxic metal ions and regulation of essential trace elements. This isoform binds exclusively copper. In Callinectes sapidus (Blue crab), this protein is Copper-specific metallothionein-2.